Here is a 492-residue protein sequence, read N- to C-terminus: Bifunctional protein GlmU (492 aa).

The pyrophosphorylase stretch occupies residues 1-238; it reads MRDAAVVILA…AALVAGVNDR (238 aa). UDP-N-acetyl-alpha-D-glucosamine-binding positions include 9–12, K23, Q80, and 85–86; these read LAAG and GT. A Mg(2+)-binding site is contributed by D111. G148, E163, N178, and N236 together coordinate UDP-N-acetyl-alpha-D-glucosamine. N236 provides a ligand contact to Mg(2+). The segment at 239-259 is linker; sequence VQLADLAAVLNRRIVEGHQRA. The tract at residues 260–492 is N-acetyltransferase; the sequence is GVTIIDPAST…EDQGPEATGE (233 aa). UDP-N-acetyl-alpha-D-glucosamine is bound by residues R341 and K359. Residue H371 is the Proton acceptor of the active site. Residues Y374 and N385 each contribute to the UDP-N-acetyl-alpha-D-glucosamine site. Residues A388, 394 to 395, S413, and A431 contribute to the acetyl-CoA site; that span reads NY. Positions 469–483 are enriched in low complexity; the sequence is EAAAAAGAGAGAAAE. Residues 469-492 form a disordered region; it reads EAAAAAGAGAGAAAEDQGPEATGE.

The protein in the N-terminal section; belongs to the N-acetylglucosamine-1-phosphate uridyltransferase family. In the C-terminal section; belongs to the transferase hexapeptide repeat family. As to quaternary structure, homotrimer. Mg(2+) is required as a cofactor.

The protein resides in the cytoplasm. The catalysed reaction is alpha-D-glucosamine 1-phosphate + acetyl-CoA = N-acetyl-alpha-D-glucosamine 1-phosphate + CoA + H(+). It catalyses the reaction N-acetyl-alpha-D-glucosamine 1-phosphate + UTP + H(+) = UDP-N-acetyl-alpha-D-glucosamine + diphosphate. It functions in the pathway nucleotide-sugar biosynthesis; UDP-N-acetyl-alpha-D-glucosamine biosynthesis; N-acetyl-alpha-D-glucosamine 1-phosphate from alpha-D-glucosamine 6-phosphate (route II): step 2/2. Its pathway is nucleotide-sugar biosynthesis; UDP-N-acetyl-alpha-D-glucosamine biosynthesis; UDP-N-acetyl-alpha-D-glucosamine from N-acetyl-alpha-D-glucosamine 1-phosphate: step 1/1. The protein operates within bacterial outer membrane biogenesis; LPS lipid A biosynthesis. Its function is as follows. Catalyzes the last two sequential reactions in the de novo biosynthetic pathway for UDP-N-acetylglucosamine (UDP-GlcNAc). The C-terminal domain catalyzes the transfer of acetyl group from acetyl coenzyme A to glucosamine-1-phosphate (GlcN-1-P) to produce N-acetylglucosamine-1-phosphate (GlcNAc-1-P), which is converted into UDP-GlcNAc by the transfer of uridine 5-monophosphate (from uridine 5-triphosphate), a reaction catalyzed by the N-terminal domain. This Mycolicibacterium vanbaalenii (strain DSM 7251 / JCM 13017 / BCRC 16820 / KCTC 9966 / NRRL B-24157 / PYR-1) (Mycobacterium vanbaalenii) protein is Bifunctional protein GlmU.